The chain runs to 236 residues: Small ribosomal subunit protein uS2c (236 aa).

The protein belongs to the universal ribosomal protein uS2 family.

Its subcellular location is the plastid. It localises to the chloroplast. This Panax ginseng (Korean ginseng) protein is Small ribosomal subunit protein uS2c (rps2).